We begin with the raw amino-acid sequence, 298 residues long: Heme A synthase (298 aa).

Over 1–6 (MHRSLK) the chain is Cytoplasmic. A helical membrane pass occupies residues 7 to 27 (IFGTLTSIGMVIVLMQGALVT). Topologically, residues 28-62 (KTESGEGCGATWPLCFGEVIPTNPAIETIIEYSHR) are extracellular. A disulfide bridge links Cys35 with Cys42. Glu58 is an active-site residue. Position 61 (His61) interacts with heme o. Residues 63–83 (IVSGLLGAMVIILAIWAWRKL) form a helical membrane-spanning segment. Over 84-92 (SHIRETKVM) the chain is Cytoplasmic. Residues 93–113 (AILAVLFIIFQGLLGAGAVVF) traverse the membrane as a helical segment. At 114-117 (GQSH) the chain is on the extracellular side. The helical transmembrane segment at 118 to 138 (AILALHFGISAISLATVVLLT) threads the bilayer. His123 contributes to the heme o binding site. Residues 139 to 158 (TLAFEDGKPNPPALIVKKGY) lie on the Cytoplasmic side of the membrane. A helical transmembrane segment spans residues 159-179 (KGYILAVFAYCYAVIYTGAYV). The Extracellular segment spans residues 180–209 (KHTQATLACGDFPLCNGQWIPMLSGPVGAH). Cys188 and Cys194 are disulfide-bonded. A helical membrane pass occupies residues 210-230 (FFHRVAGTLLLILLVVALIWT). Residue His212 coordinates heme b. Residues 231-244 (LRKYSHYRSLVWTH) lie on the Cytoplasmic side of the membrane. The helical transmembrane segment at 245–265 (ILCVILVLTQYATGISIVLTG) threads the bilayer. The Extracellular portion of the chain corresponds to 266–271 (NELFVA). The helical transmembrane segment at 272 to 292 (MMHALIVSILFTTLCYIVMIL) threads the bilayer. Residue His274 coordinates heme b. The Cytoplasmic segment spans residues 293 to 298 (SRNKAV).

The protein belongs to the COX15/CtaA family. Type 1 subfamily. Interacts with CtaB. Heme b is required as a cofactor.

The protein localises to the cell membrane. The enzyme catalyses Fe(II)-heme o + 2 A + H2O = Fe(II)-heme a + 2 AH2. Its pathway is porphyrin-containing compound metabolism; heme A biosynthesis; heme A from heme O: step 1/1. Catalyzes the conversion of heme O to heme A by two successive hydroxylations of the methyl group at C8. The first hydroxylation forms heme I, the second hydroxylation results in an unstable dihydroxymethyl group, which spontaneously dehydrates, resulting in the formyl group of heme A. The protein is Heme A synthase of Halalkalibacterium halodurans (strain ATCC BAA-125 / DSM 18197 / FERM 7344 / JCM 9153 / C-125) (Bacillus halodurans).